Reading from the N-terminus, the 432-residue chain is MRPWALAVTRWPPSAPVGQRRFSAGPGSTPGQLWGSPGLEGPLASPPARDERLPSQQPPSRPPHLPVEERRASAPAGGSPRMLHPATQQSPFMVDLHEQVHQGPVPLSYTVTTVTTQGFPLPTGQHIPGCSAQQLPACSVMFSGQHYPLCCLPPPLIQACTMQQLPVPYQAYPHLISSDHYILHPPPPAPPPQPTHMAPLGQFVSLQTQHPRMPLQRLDNDVDLRGDQPSLGSFTYSTSAPGPALSPSVPLHYLPHDPLHQELSFGVPYSHMMPRRLSTQRYRLQQPLPPPPPPPPPPPYYPSFLPYFLSMLPMSPTAMGPTISLDLDVDDVEMENYEALLNLAERLGDAKPRGLTKADIEQLPSYRFNPDSHQSEQTLCVVCFSDFEARQLLRVLPCNHEFHTKCVDKWLKANRTCPICRADASEVPREAE.

The tract at residues 1–86 (MRPWALAVTR…GGSPRMLHPA (86 aa)) is disordered. Residues 56-65 (QQPPSRPPHL) are compositionally biased toward pro residues. An RING-type; atypical zinc finger spans residues 380–421 (CVVCFSDFEARQLLRVLPCNHEFHTKCVDKWLKANRTCPICR).

This chain is RING finger protein 44 (RNF44), found in Homo sapiens (Human).